The following is a 2283-amino-acid chain: DNA polymerase epsilon catalytic subunit A (2283 aa).

Residues 1–32 are disordered; that stretch reads MVLRNSGRRHPEPGADGEGSRDDGPSSSVSAL. The span at 9–24 shows a compositional bias: basic and acidic residues; sequence RHPEPGADGEGSRDDG. A phosphoserine mark is found at S1184, S1296, and S1316. 2 disordered regions span residues 1935 to 1968 and 2014 to 2041; these read GQVKEQDSQAREETDEEEEDKEKDEEEEGMGESE and HSAPGSTPVKRKGASQFSQESEGATGSL. Basic and acidic residues predominate over residues 1936–1946; sequence QVKEQDSQARE. Residues 1947-1968 show a composition bias toward acidic residues; sequence ETDEEEEDKEKDEEEEGMGESE. Positions 2028–2037 are enriched in polar residues; it reads SQFSQESEGA. C2155, C2158, C2184, and C2187 together coordinate Zn(2+). The CysA-type zinc-finger motif lies at 2155 to 2187; it reads CHSCNFCRDLDLCKDSSFSQDGAILPQWLCSNC. The [4Fe-4S] cluster site is built by C2218, C2221, C2233, and C2235. The short motif at 2218-2235 is the CysB motif element; the sequence is CLKCRGMKETHMPVYCSC.

This sequence belongs to the DNA polymerase type-B family. Component of the DNA polymerase epsilon complex consisting of four subunits: the catalytic subunit POLE and the accessory subunits POLE2, POLE3 and POLE4. Interacts with RAD17 and TOPBP1. [4Fe-4S] cluster serves as cofactor.

It localises to the nucleus. It catalyses the reaction DNA(n) + a 2'-deoxyribonucleoside 5'-triphosphate = DNA(n+1) + diphosphate. Its function is as follows. Catalytic component of the DNA polymerase epsilon complex. Participates in chromosomal DNA replication. Required during synthesis of the leading DNA strands at the replication fork and binds at/or near replication origins and moves along DNA with the replication fork. Has 3'-5' proofreading exonuclease activity that corrects errors arising during DNA replication. It is also involved in DNA synthesis during DNA repair. The sequence is that of DNA polymerase epsilon catalytic subunit A (Pole) from Mus musculus (Mouse).